A 291-amino-acid polypeptide reads, in one-letter code: Elongation factor Ts (291 aa).

Residues 79-82 (TDFV) form an involved in Mg(2+) ion dislocation from EF-Tu region.

This sequence belongs to the EF-Ts family.

It localises to the cytoplasm. Associates with the EF-Tu.GDP complex and induces the exchange of GDP to GTP. It remains bound to the aminoacyl-tRNA.EF-Tu.GTP complex up to the GTP hydrolysis stage on the ribosome. In Dinoroseobacter shibae (strain DSM 16493 / NCIMB 14021 / DFL 12), this protein is Elongation factor Ts.